The chain runs to 506 residues: Maturase K (506 aa).

Belongs to the intron maturase 2 family. MatK subfamily.

It localises to the plastid. The protein localises to the chloroplast. Its function is as follows. Usually encoded in the trnK tRNA gene intron. Probably assists in splicing its own and other chloroplast group II introns. The sequence is that of Maturase K from Andromeda polifolia (Bog rosemary).